Reading from the N-terminus, the 795-residue chain is MSNKQNATLNITGMTCAACSNRIEKRLNKMDNVKAQVNLTTEKATIEYDTNDYAINDFVTTVQKLGYDVVIDKAELDITGMTCAACSNRIEKVLNKAPGVKDATVNLTTEQAMVTYYPGQTDLDTLIGRIRNLGYDAQPKQSEEDQATRKQQELKHKRNKLMISTILSLPLLMTMLVHLFNMHLPDILMNPWFQFILATPIQFIIGWQFYVGAYKNLRNGGFNMDVLVALGTSAAYFYSIYEMIKWFSGATNMPHLYFETSAVLITLILFGKYLEARAKSQTTNALSELLNLQAKEARLIDDNGMEKMVPLNQVNVDDILLIKPGEKIPVDGQIIKGETAIDESMLTGESMPVDKHVDDVVIGSTMNTNGVITIMATKVGKDTALSNIIKVVEEAQSSKAPIQRLADIISGYFVPIVIAIALLTFLIWITLVHPGQFEDALVAAISVLVIACPCALGLATPTSIMVGTGRAAENGILFKGGEYVERTHQVDTVVFDKTGTLTHGKPEVTYFEGDKDTLTLVASAENNSEHPLATAIVNYAKQHKVNLVNVTNYQTLPGHGIQAIIDDSMLFVGNQKLMLDHQINIQSIKQKMKQMEAEGHTVMLIAYDGKLRGMIAVADTVKASAKEAIQQLSSMNIRTVMLTGDNERTAKAIAKEVGIDQVIAGVLPEDKAHHITQLQEQKHNVAMVGDGINDAPALVKADIGIAMGTGTEVAIEAADITILGGDIQLVPKAIHASHKTIRNIKQNLFWAFGYNIAGIPIAAMGLLAPWIAGAAMALSSVSVVSNALRLKRMKL.

HMA domains follow at residues 5 to 70 (QNAT…YDVV) and 72 to 138 (DKAE…YDAQ). Cu(+) contacts are provided by cysteine 16, cysteine 19, cysteine 83, and cysteine 86. 6 consecutive transmembrane segments (helical) span residues 161–181 (LMISTILSLPLLMTMLVHLFN), 187–207 (ILMNPWFQFILATPIQFIIGW), 224–244 (MDVLVALGTSAAYFYSIYEMI), 256–276 (LYFETSAVLITLILFGKYLEA), 412–432 (YFVPIVIAIALLTFLIWITLV), and 440–460 (ALVAAISVLVIACPCALGLAT). Aspartate 496 acts as the 4-aspartylphosphate intermediate in catalysis. Mg(2+) is bound by residues aspartate 690 and aspartate 694. Helical transmembrane passes span 747–764 (NLFWAFGYNIAGIPIAAM) and 770–788 (WIAGAAMALSSVSVVSNAL).

It belongs to the cation transport ATPase (P-type) (TC 3.A.3) family. Type IB subfamily.

It localises to the cell membrane. The catalysed reaction is Cu(+)(in) + ATP + H2O = Cu(+)(out) + ADP + phosphate + H(+). Involved in copper export. The protein is Copper-exporting P-type ATPase (copA) of Staphylococcus haemolyticus (strain JCSC1435).